The chain runs to 516 residues: Serine carboxypeptidase-like 49 (516 aa).

Positions 1 to 22 are cleaved as a signal peptide; sequence MEKLTFLSLLLHFVVFIASTIP. Residues 23–82 constitute a propeptide that is removed on maturation; the sequence is SSSFLLNDRTFERSNLPSTRAEKLIRELNLFPQQDLNVIDVADLPLTAAEGPGIVERKFV. 3 disulfide bridges follow: C139–C379, C307–C322, and C345–C350. The N-linked (GlcNAc...) asparagine glycan is linked to N157. The active site involves S229. The active site involves D417. A substrate-binding site is contributed by C420. The active site involves H474.

The protein belongs to the peptidase S10 family. As to expression, expressed in roots, senescent leaves and flowers.

It localises to the secreted. Functionally, probable carboxypeptidase. In Arabidopsis thaliana (Mouse-ear cress), this protein is Serine carboxypeptidase-like 49 (SCPL49).